The sequence spans 430 residues: Protein translocase subunit SecY (430 aa).

The next 10 membrane-spanning stretches (helical) occupy residues 18-38 (VIFT…PVPG), 67-87 (FSIF…MQLL), 118-138 (IVLG…FFPG), 145-165 (VSVY…LMWL), 177-197 (GISI…LNLI), 213-233 (IVVI…VIFV), 270-290 (VIPV…AGLF), 309-329 (PIGM…YTFI), 369-389 (FVGS…IKFA), and 390-410 (DLPQ…GVAL).

Belongs to the SecY/SEC61-alpha family. Component of the Sec protein translocase complex. Heterotrimer consisting of SecY, SecE and SecG subunits. The heterotrimers can form oligomers, although 1 heterotrimer is thought to be able to translocate proteins. Interacts with the ribosome. Interacts with SecDF, and other proteins may be involved. Interacts with SecA.

Its subcellular location is the cell membrane. Functionally, the central subunit of the protein translocation channel SecYEG. Consists of two halves formed by TMs 1-5 and 6-10. These two domains form a lateral gate at the front which open onto the bilayer between TMs 2 and 7, and are clamped together by SecE at the back. The channel is closed by both a pore ring composed of hydrophobic SecY resides and a short helix (helix 2A) on the extracellular side of the membrane which forms a plug. The plug probably moves laterally to allow the channel to open. The ring and the pore may move independently. The polypeptide is Protein translocase subunit SecY (Halalkalibacterium halodurans (strain ATCC BAA-125 / DSM 18197 / FERM 7344 / JCM 9153 / C-125) (Bacillus halodurans)).